Consider the following 379-residue polypeptide: uncharacterized protein (379 aa).

It belongs to the glycosyltransferase 28 family.

This is an uncharacterized protein from Methanosarcina acetivorans (strain ATCC 35395 / DSM 2834 / JCM 12185 / C2A).